A 362-amino-acid chain; its full sequence is Alanine racemase (362 aa).

Catalysis depends on Lys-33, which acts as the Proton acceptor; specific for D-alanine. Lys-33 carries the N6-(pyridoxal phosphate)lysine modification. Arg-129 lines the substrate pocket. The active-site Proton acceptor; specific for L-alanine is Tyr-254. Met-302 is a binding site for substrate.

Belongs to the alanine racemase family. Pyridoxal 5'-phosphate serves as cofactor.

It catalyses the reaction L-alanine = D-alanine. The protein operates within amino-acid biosynthesis; D-alanine biosynthesis; D-alanine from L-alanine: step 1/1. In terms of biological role, catalyzes the interconversion of L-alanine and D-alanine. May also act on other amino acids. The polypeptide is Alanine racemase (alr) (Xylella fastidiosa (strain 9a5c)).